The sequence spans 193 residues: CASP-like protein 1E1 (193 aa).

Residues 1-30 (MESQNKASLPVMDGLERRVVASQSEGASTC) are Cytoplasmic-facing. A helical transmembrane segment spans residues 31–51 (DLLLRVLALVLTLAAAIVLGV). Topologically, residues 52 to 86 (DKQTKVVPIKIVDTLPAINLPVSAKWHYLSAFTYS) are extracellular. The chain crosses the membrane as a helical span at residues 87 to 107 (VASNAIACSYAALSLVLAVSG). Residues 108–113 (KKGIMS) lie on the Cytoplasmic side of the membrane. The helical transmembrane segment at 114–134 (IVIVLDLLMVAMLFSSNGAAL) threads the bilayer. The Extracellular portion of the chain corresponds to 135–162 (AIGLMGYQGNSHVRWTKVCHVFGRFCNQ). The chain crosses the membrane as a helical span at residues 163 to 183 (VAVSISLSLLGSILFLLLVGI). Over 184–193 (TSLRLHKKSK) the chain is Cytoplasmic.

The protein belongs to the Casparian strip membrane proteins (CASP) family. As to quaternary structure, homodimer and heterodimers.

The protein localises to the cell membrane. The chain is CASP-like protein 1E1 from Populus trichocarpa (Western balsam poplar).